Reading from the N-terminus, the 216-residue chain is Large ribosomal subunit protein uL4 (216 aa).

Residues 51 to 78 (KGRSEVHGSNTKPYKQKGTGRARRGDKK) are disordered. Residues 64-76 (YKQKGTGRARRGD) show a composition bias toward basic residues.

Belongs to the universal ribosomal protein uL4 family. In terms of assembly, part of the 50S ribosomal subunit.

In terms of biological role, one of the primary rRNA binding proteins, this protein initially binds near the 5'-end of the 23S rRNA. It is important during the early stages of 50S assembly. It makes multiple contacts with different domains of the 23S rRNA in the assembled 50S subunit and ribosome. Functionally, forms part of the polypeptide exit tunnel. This is Large ribosomal subunit protein uL4 from Treponema pallidum (strain Nichols).